Reading from the N-terminus, the 508-residue chain is Phenylalanine--tRNA ligase alpha subunit (508 aa).

An N-acetylalanine modification is found at Ala2. Phosphoserine is present on residues Ser193 and Ser301. Lys311 carries the N6-acetyllysine modification. Residues Thr329, 372–374 (QIE), and Tyr412 each bind L-phenylalanine. Glu414 provides a ligand contact to Mg(2+). Residue Phe438 participates in L-phenylalanine binding.

The protein belongs to the class-II aminoacyl-tRNA synthetase family. Phe-tRNA synthetase alpha subunit type 2 subfamily. As to quaternary structure, heterotetramer; dimer of two heterodimers formed by FARSA and FARSB. Requires Mg(2+) as cofactor.

It localises to the cytoplasm. The catalysed reaction is tRNA(Phe) + L-phenylalanine + ATP = L-phenylalanyl-tRNA(Phe) + AMP + diphosphate + H(+). This Rattus norvegicus (Rat) protein is Phenylalanine--tRNA ligase alpha subunit (Farsa).